Here is a 359-residue protein sequence, read N- to C-terminus: Stearoyl-CoA desaturase (359 aa).

Residues 1–72 (MPAHLLQDDI…EGPSPKVEYV (72 aa)) are Cytoplasmic-facing. Residues 73-93 (WRNIILMSLLHLGALYGITLI) form a helical membrane-spanning segment. Position 75 (N75) interacts with substrate. The Lumenal portion of the chain corresponds to 94-97 (PTCK). Residues 98–118 (FYTWLWGVFYYFVSALGITAG) traverse the membrane as a helical segment. Topologically, residues 119-217 (AHRLWSHRSY…EKLVMFQRRY (99 aa)) are cytoplasmic. 2 residues coordinate Fe cation: H120 and H125. The Histidine box-1 signature appears at 120 to 125 (HRLWSH). Residues N148, R155, and D156 each contribute to the substrate site. Fe cation contacts are provided by H157, H160, and H161. A Histidine box-2 motif is present at residues 157–161 (HRAHH). 2 residues coordinate substrate: R188 and K189. S198 and S203 each carry phosphoserine. The chain crosses the membrane as a helical span at residues 218 to 237 (YKPGLLMMCFILPTLVPWYF). Over 238-241 (WGET) the chain is Lumenal. A helical transmembrane segment spans residues 242–263 (FQNSVFVATFLRYAVVLNATWL). W262 lines the substrate pocket. Topologically, residues 264–359 (VNSAAHLFGY…RTGDGNYKSG (96 aa)) are cytoplasmic. Positions 269, 298, 301, and 302 each coordinate Fe cation. The short motif at 298 to 302 (HNYHH) is the Histidine box-3 element.

It belongs to the fatty acid desaturase type 1 family. As to quaternary structure, may self-associate and form homodimers. It depends on Fe(2+) as a cofactor. As to expression, detected in fetal liver, lung and brain. Highly expressed in adult adipose tissue, and at lower levels in adult brain and lung.

Its subcellular location is the endoplasmic reticulum membrane. The enzyme catalyses octadecanoyl-CoA + 2 Fe(II)-[cytochrome b5] + O2 + 2 H(+) = (9Z)-octadecenoyl-CoA + 2 Fe(III)-[cytochrome b5] + 2 H2O. The catalysed reaction is hexadecanoyl-CoA + 2 Fe(II)-[cytochrome b5] + O2 + 2 H(+) = (9Z)-hexadecenoyl-CoA + 2 Fe(III)-[cytochrome b5] + 2 H2O. Its function is as follows. Stearoyl-CoA desaturase that utilizes O(2) and electrons from reduced cytochrome b5 to introduce the first double bond into saturated fatty acyl-CoA substrates. Catalyzes the insertion of a cis double bond at the delta-9 position into fatty acyl-CoA substrates including palmitoyl-CoA and stearoyl-CoA. Gives rise to a mixture of 16:1 and 18:1 unsaturated fatty acids. Plays an important role in lipid biosynthesis. Plays an important role in regulating the expression of genes that are involved in lipogenesis and in regulating mitochondrial fatty acid oxidation. Plays an important role in body energy homeostasis. Contributes to the biosynthesis of membrane phospholipids, cholesterol esters and triglycerides. The chain is Stearoyl-CoA desaturase (SCD) from Homo sapiens (Human).